Reading from the N-terminus, the 184-residue chain is MGLEERLPGGILLSTVEKVAGYVRAGSLWPATFGLACCAIEMMSTAGPRFDISRFGMERFSATPRQADLMIVAGRVSQKMAPVLRQIYDQMAEPKWVLAMGVCASSGGMFNNYAIVQGVDHVVPVDIYLPGCPPRPEMLLHAIIKLHEKIQQMPLGVNRDEAIREAEQAALAVPSTIELKGLLR.

C37, C38, C103, and C132 together coordinate [4Fe-4S] cluster.

It belongs to the complex I 20 kDa subunit family. As to quaternary structure, NDH-1 is composed of 14 different subunits. Subunits NuoB, C, D, E, F, and G constitute the peripheral sector of the complex. The cofactor is [4Fe-4S] cluster.

The protein resides in the cell membrane. It carries out the reaction a quinone + NADH + 5 H(+)(in) = a quinol + NAD(+) + 4 H(+)(out). Its function is as follows. NDH-1 shuttles electrons from NADH, via FMN and iron-sulfur (Fe-S) centers, to quinones in the respiratory chain. The immediate electron acceptor for the enzyme in this species is believed to be a menaquinone. Couples the redox reaction to proton translocation (for every two electrons transferred, four hydrogen ions are translocated across the cytoplasmic membrane), and thus conserves the redox energy in a proton gradient. The chain is NADH-quinone oxidoreductase subunit B from Mycobacterium sp. (strain JLS).